The chain runs to 361 residues: Peptide chain release factor 1 (361 aa).

N5-methylglutamine is present on Gln-237.

The protein belongs to the prokaryotic/mitochondrial release factor family. Methylated by PrmC. Methylation increases the termination efficiency of RF1.

It is found in the cytoplasm. Its function is as follows. Peptide chain release factor 1 directs the termination of translation in response to the peptide chain termination codons UAG and UAA. The chain is Peptide chain release factor 1 from Thioalkalivibrio sulfidiphilus (strain HL-EbGR7).